We begin with the raw amino-acid sequence, 415 residues long: Multidrug resistance protein MdtA (415 aa).

The first 21 residues, 1-21 (MKSTVKKRGWVIAGIVVVALA), serve as a signal peptide directing secretion. A disordered region spans residues 387-415 (AQTAADAAKPERGERAPTDSARAAKGARS). A compositionally biased stretch (basic and acidic residues) spans 394–403 (AKPERGERAP).

Belongs to the membrane fusion protein (MFP) (TC 8.A.1) family. As to quaternary structure, part of a tripartite efflux system composed of MdtA, MdtB and MdtC.

It localises to the cell inner membrane. This chain is Multidrug resistance protein MdtA, found in Cronobacter turicensis (strain DSM 18703 / CCUG 55852 / LMG 23827 / z3032).